Consider the following 218-residue polypeptide: MTQDEMKRAVARAAVDYAKGGIIGVGTGSTANHFIDALAEVKGRIEGTVASSEATAARLKSHGIQVLDLNSVGELEVYVDGADEITQHFAMIKGGGGALTREKIVAACSKQFVCIADDSKLVDVLGKFPLPVEVIPMARSHVARELVKLGGQPRLREGFTTDNGNVILDVHNLSIIDPVSLETAINQIVGVVTNGLFARRGADVLLLGTSTGVKTFTR.

Substrate contacts are provided by residues 27-30 (TGST), 80-83 (DGAD), and 93-96 (KGGG). Residue glutamate 102 is the Proton acceptor of the active site. Lysine 120 provides a ligand contact to substrate.

This sequence belongs to the ribose 5-phosphate isomerase family. As to quaternary structure, homodimer.

The catalysed reaction is aldehydo-D-ribose 5-phosphate = D-ribulose 5-phosphate. It functions in the pathway carbohydrate degradation; pentose phosphate pathway; D-ribose 5-phosphate from D-ribulose 5-phosphate (non-oxidative stage): step 1/1. Its function is as follows. Catalyzes the reversible conversion of ribose-5-phosphate to ribulose 5-phosphate. In Thiobacillus denitrificans (strain ATCC 25259 / T1), this protein is Ribose-5-phosphate isomerase A.